We begin with the raw amino-acid sequence, 341 residues long: RNA 3'-terminal phosphate cyclase (341 aa).

ATP-binding positions include Q102 and 283–287 (HLADQ). Catalysis depends on H308, which acts as the Tele-AMP-histidine intermediate.

The protein belongs to the RNA 3'-terminal cyclase family. Type 1 subfamily.

The protein localises to the cytoplasm. It carries out the reaction a 3'-end 3'-phospho-ribonucleotide-RNA + ATP = a 3'-end 2',3'-cyclophospho-ribonucleotide-RNA + AMP + diphosphate. In terms of biological role, catalyzes the conversion of 3'-phosphate to a 2',3'-cyclic phosphodiester at the end of RNA. The mechanism of action of the enzyme occurs in 3 steps: (A) adenylation of the enzyme by ATP; (B) transfer of adenylate to an RNA-N3'P to produce RNA-N3'PP5'A; (C) and attack of the adjacent 2'-hydroxyl on the 3'-phosphorus in the diester linkage to produce the cyclic end product. The biological role of this enzyme is unknown but it is likely to function in some aspects of cellular RNA processing. This Ectopseudomonas mendocina (strain ymp) (Pseudomonas mendocina) protein is RNA 3'-terminal phosphate cyclase.